Consider the following 1149-residue polypeptide: Guanine nucleotide exchange factor DBS (1149 aa).

Residues 52 to 224 (AATASDEIMH…DLGGTLDYCH (173 aa)) form the CRAL-TRIO domain. Residues 351–456 (LQLRHFEQGF…VTRRRGLLSK (106 aa)) form a Spectrin repeat. S457, S462, S471, and S480 each carry phosphoserine. Positions 503-529 (LETGAENKIQELNEIYKEYECILNQDL) form a coiled coil. Residues 555–627 (KKLAAKQTRP…RTSSTGEEEE (73 aa)) form a disordered region. Positions 583–594 (PGSWRSSENSSS) are enriched in low complexity. The span at 607-616 (AKSEMSEPRQ) shows a compositional bias: basic and acidic residues. S621 bears the Phosphoserine mark. T622 is subject to Phosphothreonine. Positions 632-812 (LRRHVMNELL…LGILKAVNDS (181 aa)) constitute a DH domain. The PH domain maps to 841-950 (TDHKKGHTKV…IRKVLTSQLQ (110 aa)). Residues 956–1033 (SQHRALEQSH…EAPEEDGGWS (78 aa)) form a disordered region. A compositionally biased stretch (low complexity) spans 966-978 (SLPLPTPSSTSPT). A phosphoserine mark is found at S1033, S1034, S1041, and S1042. The SH3 domain maps to 1055 to 1116 (LVPGKYTVVM…PASSLSTLLG (62 aa)).

It belongs to the MCF2 family. Interacts with GTP-bound RAC1. Interacts with CDC42. Interacts with RHOA. Interacts with CCPG1, which results in specific inhibition of its exchange activity toward RHOA, but does not affect its activity on CDC42. In terms of tissue distribution, expressed at low levels in several hemopoietic cell lines and in thymus and spleen, and at higher levels in other tissues, particularly in brain.

The protein localises to the cytoplasm. The protein resides in the cell membrane. Functionally, guanine nucleotide exchange factor that catalyzes guanine nucleotide exchange on RHOA and CDC42, and thereby contributes to the regulation of RHOA and CDC42 signaling pathways. Seems to lack activity with RAC1. Becomes activated and highly tumorigenic by truncation of the N-terminus. This chain is Guanine nucleotide exchange factor DBS (Mcf2l), found in Mus musculus (Mouse).